The sequence spans 190 residues: Dense granule protein 1 (190 aa).

The first 24 residues, 1-24, serve as a signal peptide directing secretion; sequence MVRVSAIVGAAASVFVCLSAGAYA. Asn30 carries N-linked (GlcNAc...) asparagine glycosylation.

Its subcellular location is the secreted. In Toxoplasma gondii, this protein is Dense granule protein 1 (GRA1).